Here is an 80-residue protein sequence, read N- to C-terminus: Cell division activator CedA (80 aa).

Belongs to the CedA family.

Functionally, activates the cell division inhibited by chromosomal DNA over-replication. This is Cell division activator CedA from Salmonella arizonae (strain ATCC BAA-731 / CDC346-86 / RSK2980).